We begin with the raw amino-acid sequence, 62 residues long: Photosystem II reaction center protein Z (62 aa).

The next 2 helical transmembrane spans lie at 8–28 and 41–61; these read ALFA…VILA and FSGA…NSFI.

This sequence belongs to the PsbZ family. PSII is composed of 1 copy each of membrane proteins PsbA, PsbB, PsbC, PsbD, PsbE, PsbF, PsbH, PsbI, PsbJ, PsbK, PsbL, PsbM, PsbT, PsbY, PsbZ, Psb30/Ycf12, at least 3 peripheral proteins of the oxygen-evolving complex and a large number of cofactors. It forms dimeric complexes.

Its subcellular location is the plastid. The protein resides in the chloroplast thylakoid membrane. In terms of biological role, may control the interaction of photosystem II (PSII) cores with the light-harvesting antenna, regulates electron flow through the 2 photosystem reaction centers. PSII is a light-driven water plastoquinone oxidoreductase, using light energy to abstract electrons from H(2)O, generating a proton gradient subsequently used for ATP formation. This chain is Photosystem II reaction center protein Z, found in Chara vulgaris (Common stonewort).